Consider the following 347-residue polypeptide: NADH-ubiquinone oxidoreductase chain 2 (347 aa).

Helical transmembrane passes span 3–23 (PMIL…VMMS), 25–45 (HWFL…PVLM), 59–79 (YFLT…INLI), 96–116 (TLLT…FWVP), 122–142 (VSLN…LSLL), 149–169 (VNTN…GWGG), 178–198 (IMAY…IYNP), 201–221 (SLLN…LLMF), 239–259 (IITT…PLSG), 274–294 (DSVI…FFYM), and 326–346 (MTSL…AMIL).

Belongs to the complex I subunit 2 family. As to quaternary structure, core subunit of respiratory chain NADH dehydrogenase (Complex I) which is composed of 45 different subunits. Interacts with TMEM242.

It is found in the mitochondrion inner membrane. The enzyme catalyses a ubiquinone + NADH + 5 H(+)(in) = a ubiquinol + NAD(+) + 4 H(+)(out). Functionally, core subunit of the mitochondrial membrane respiratory chain NADH dehydrogenase (Complex I) which catalyzes electron transfer from NADH through the respiratory chain, using ubiquinone as an electron acceptor. Essential for the catalytic activity and assembly of complex I. This is NADH-ubiquinone oxidoreductase chain 2 from Sylvisorex johnstoni (Johnston's forest shrew).